Reading from the N-terminus, the 183-residue chain is Chromophore lyase CpcT/CpeT 4 (183 aa).

Belongs to the CpcT/CpeT biliprotein lyase family.

Its function is as follows. Covalently attaches a chromophore to Cys residue(s) of phycobiliproteins. The polypeptide is Chromophore lyase CpcT/CpeT 4 (Gloeobacter violaceus (strain ATCC 29082 / PCC 7421)).